The chain runs to 704 residues: MARLVALDKVRNIGIMAHIDAGKTTTTERILYYTGRLHRMGEVHEGGATMDWMEQEKERGITITSAATTCFWSPNYGNYSGLRHRINIIDTPGHVDFTVEVERSLRVLDGAVALFCAVGGVEPQSETVWRQANKYGVPRIAYVNKMDRTGANFFDTVKAIRERLSANPVPIQIPIGEGEIFAGFVDLIRMKGVIYDKDDGSTYNEVEIPHDLQNEARTWRINMLEAVSEVDETLLEKYLNGEDITEEEIRVVLRKATLNVSIIPVLCGSSFKNKGVQFMLDAVVEYLASPVDVGAVEGHHPRTEETVVREPRDEEPFAGLAFKIATDPFVGKLTFFRVYSGVLHAGSYVLNTVTGKKERIGRVLQMHSNKREDIECVYAGDIAAAVGLKDVRTGDTICDENNPVVLEKMIFPEPVIQIAIEPKTKADSDRLGMSLAKLAEEDPTFKVKTDDETGQTLIAGMGELHLEILVDRLKREFKVEATVGQPQVAYRETIRKAVEFEGKFVRQSGGKGQFGLVNLKVEPLEEGKGYEFVDAVKGGVIPREYIPAVNAGVQQAMKDGVVAGYAMQDIKVTLFDGKYHEVDSSEMAFKIAGSIGFKGAAKKADPVLLEPIMKVEVVTPDEYLGDVMGDLSSRRGHIEGMGQRAGAQFVNAKVPLSAMFGYSTDLRSMTQGRANYSMEFECYREVPRSIAESLQEKRVSKETV.

One can recognise a tr-type G domain in the interval 8 to 291; it reads DKVRNIGIMA…AVVEYLASPV (284 aa). Residues 17–24, 90–94, and 144–147 each bind GTP; these read AHIDAGKT, DTPGH, and NKMD.

This sequence belongs to the TRAFAC class translation factor GTPase superfamily. Classic translation factor GTPase family. EF-G/EF-2 subfamily.

The protein resides in the cytoplasm. Functionally, catalyzes the GTP-dependent ribosomal translocation step during translation elongation. During this step, the ribosome changes from the pre-translocational (PRE) to the post-translocational (POST) state as the newly formed A-site-bound peptidyl-tRNA and P-site-bound deacylated tRNA move to the P and E sites, respectively. Catalyzes the coordinated movement of the two tRNA molecules, the mRNA and conformational changes in the ribosome. In Chlorobium phaeobacteroides (strain DSM 266 / SMG 266 / 2430), this protein is Elongation factor G.